The chain runs to 585 residues: Butyrophilin subfamily 3 member A3 (585 aa).

A signal peptide spans 1–29; the sequence is MKMASSLACLLLNFHVSVFLVQLLTPCSA. 2 Ig-like V-type domains span residues 30–139 and 145–236; these read QFSV…KALV and ALGS…ASIS. The Extracellular segment spans residues 30-248; that stretch reads QFSVLGPSGP…DPFFTSAQPW (219 aa). Cystine bridges form between Cys52/Cys126 and Cys166/Cys220. N-linked (GlcNAc...) asparagine glycosylation is present at Asn115. The chain crosses the membrane as a helical span at residues 249 to 269; sequence IAALAGTLPISLLLLAGASYF. At 270–585 the chain is on the cytoplasmic side; that stretch reads LWRQQKEKIA…KPQACTEALY (316 aa). One can recognise a B30.2/SPRY domain in the interval 322–518; that stretch reads RGEKSLAYHE…LTICPTPKEV (197 aa). The interval 560–585 is disordered; sequence AGAEGVSPSTTTSQNHKPQACTEALY. Residues 566 to 576 show a composition bias toward polar residues; sequence SPSTTTSQNHK.

It belongs to the immunoglobulin superfamily. BTN/MOG family.

The protein resides in the membrane. The sequence is that of Butyrophilin subfamily 3 member A3 (BTN3A3) from Pongo abelii (Sumatran orangutan).